The sequence spans 101 residues: Small ubiquitin-related modifier 1 (101 aa).

The residue at position 2 (serine 2) is an N-acetylserine. The residue at position 2 (serine 2) is a Phosphoserine. Lysine 7 is covalently cross-linked (Glycyl lysine isopeptide (Lys-Gly) (interchain with G-Cter in SUMO1); alternate). A Glycyl lysine isopeptide (Lys-Gly) (interchain with G-Cter in SUMO2); alternate cross-link involves residue lysine 7. Serine 9 bears the Phosphoserine mark. Glycyl lysine isopeptide (Lys-Gly) (interchain with G-Cter in SUMO2) cross-links involve residues lysine 16, lysine 17, and lysine 23. Residues 20–97 (EYIKLKVIGQ…IEVYHEQTGG (78 aa)) enclose the Ubiquitin-like domain. Lysine 25 is covalently cross-linked (Glycyl lysine isopeptide (Lys-Gly) (interchain with G-Cter in SUMO1)). Position 32 is a phosphoserine (serine 32). Glycyl lysine isopeptide (Lys-Gly) (interchain with G-Cter in SUMO2) cross-links involve residues lysine 37, lysine 39, lysine 45, and lysine 46. Residue glycine 97 forms a Glycyl lysine isopeptide (Gly-Lys) (interchain with K-? in acceptor proteins) linkage. Residues 98–101 (HSTV) constitute a propeptide that is removed on maturation.

Belongs to the ubiquitin family. SUMO subfamily. Covalently attached to KCNB1; UBE2I increases cross-linking with KCNB1 and PIAS1 decreases cross-links with KCNB1. Interacts with SAE2, RANBP2, PIAS1 and PIAS2. Interacts with PRKN. Covalently attached to a number of proteins such as IKFZ1, PML, RANGAP1, HIPK2, SP100, p53, p73-alpha, MDM2, JUN, DNMT3B and TDG. Also interacts with HIF1A, HIPK2, HIPK3, CHD3, EXOSC9, RAD51 and RAD52. Interacts with USP25 (via ts SIM domain); the interaction weakly sumoylates USP25. Interacts with SIMC1, CASP8AP2, RNF111 and SOBP (via SIM domains). Interacts with BHLHE40/DEC1. Interacts with RWDD3. Interacts with UBE2I/UBC9 and this interaction is enhanced in the presence of RWDD3. Interacts with MTA1. Interacts with SENP2. Interacts with HINT1. Cleavage of precursor form by SENP1, SENP2 is necessary for function. Post-translationally, polymeric SUMO1 chains undergo polyubiquitination by RNF4.

The protein resides in the nucleus membrane. It localises to the nucleus speckle. The protein localises to the cytoplasm. It is found in the nucleus. Its subcellular location is the PML body. The protein resides in the cell membrane. Functionally, ubiquitin-like protein that can be covalently attached to proteins as a monomer or a lysine-linked polymer. Covalent attachment via an isopeptide bond to its substrates requires prior activation by the E1 complex SAE1-SAE2 and linkage to the E2 enzyme UBE2I, and can be promoted by E3 ligases such as PIAS1-4, RANBP2 or CBX4. This post-translational modification on lysine residues of proteins plays a crucial role in a number of cellular processes such as nuclear transport, DNA replication and repair, mitosis and signal transduction. Involved for instance in targeting RANGAP1 to the nuclear pore complex protein RANBP2. Covalently attached to the voltage-gated potassium channel KCNB1; this modulates the gating characteristics of KCNB1. Polymeric SUMO1 chains are also susceptible to polyubiquitination which functions as a signal for proteasomal degradation of modified proteins. May also regulate a network of genes involved in palate development. Covalently attached to ZFHX3. This chain is Small ubiquitin-related modifier 1 (SUMO1), found in Cervus nippon (Sika deer).